Consider the following 384-residue polypeptide: MLPSNEPLTALGRETTTPLSIQLLLFVDDRPSSQEIIRQIQSYLQSLKSDYPIDLQIIEIRQQPHLVEHFRLVATPALVKIAPGPRHTLAGSNLVEQFKKWLVRWQKAIKEEVKNHHAEDAQLQEVEHSGELIRIADEVFRLKQEKEELLEQLKFKDQILAMLAHDLRSPLTAASIAVETLELAYHQPDTERSLQLREQLHQQARKQFRIMNRLITDILQASKSMAAQFTLHQSKFYLQSLCQEILSQFTDTFQEKTLIFQSDIPQDLPPVYADEELIRQVIINLLENGIKYTPAGGEITLSVLHRTTQKVQVSISDTGPGIPEEKQEHIFEGHVRLKRDEGKEGYGIGLSVCRKIIRAHYGQIWVDSVPDHGSSFHFTLPVYR.

A Histidine kinase domain is found at 162–384 (MLAHDLRSPL…SFHFTLPVYR (223 aa)). Phosphohistidine; by autocatalysis is present on histidine 165.

Homooligomerizes. Interacts with KaiC. Participates in the KaiABC clock complex, whose core is composed of a KaiC homohexamer, 6 KaiB and up to 6 KaiA dimers. SasA and KaiB(fs) compete to bind to KaiC.

The catalysed reaction is ATP + protein L-histidine = ADP + protein N-phospho-L-histidine.. In terms of biological role, member of the two-component regulatory system SasA/RpaA involved in genome-wide circadian gene expression. One of several clock output pathways. Participates in the Kai clock protein complex, the main circadian regulator in cyanobacteria, via its interaction with KaiC. KaiC enhances the autophosphorylation activity of SasA, which then transfers its phosphate group to RpaA to activate it. In addition to its output function, recruits fold-shifted KaiB (KaiB(fs)) to KaiC to cooperatively form the KaiB(6):KaiC(6) complex (independent of SasA kinase activity). Required for robustness of the circadian rhythm of gene expression and is involved in clock output, also required for adaptation to light/dark cycles. This Microcystis aeruginosa (strain NIES-843 / IAM M-2473) protein is Adaptive-response sensory kinase SasA.